Reading from the N-terminus, the 754-residue chain is Probable galactinol--sucrose galactosyltransferase 1 (754 aa).

Belongs to the glycosyl hydrolases 36 family.

It carries out the reaction alpha-D-galactosyl-(1-&gt;3)-1D-myo-inositol + sucrose = raffinose + myo-inositol. Transglycosidase operating by a ping-pong reaction mechanism. Involved in the synthesis of raffinose, a major soluble carbohydrate in seeds, roots and tubers. In Arabidopsis thaliana (Mouse-ear cress), this protein is Probable galactinol--sucrose galactosyltransferase 1 (RFS1).